The following is a 290-amino-acid chain: MDIGLREWLIVIGLIVIAGILFDGWRRMRGGKGKLKFKLDRSFANLPDDDGDSAELLGPARVVEHREPSFDEQDLPSVSAREGKERKGGKRQDEPRQGDLDLDEGMALEADPSDAAEPLEPRKGKSKGRKEKEREKAPSVAAAEPAPVDEVLIINVIARDESGFKGPALLQNILESGLRFGDMDIFHRHESMAGNGEILFSMANAVKPGTFDLDDIDNFSTRAVSFFLGLPGPRHPKQAFDVMVAAARKLAHELNGELKDEQRSVLTAQTIEHYRQRIIDHERRSLMQKR.

A topological domain (periplasmic) is located at residue Met1. Residues 2–22 (DIGLREWLIVIGLIVIAGILF) form a helical membrane-spanning segment. Over 23-290 (DGWRRMRGGK…HERRSLMQKR (268 aa)) the chain is Cytoplasmic. The interval 66–143 (REPSFDEQDL…REKAPSVAAA (78 aa)) is disordered. Residues 81–99 (REGKERKGGKRQDEPRQGD) show a composition bias toward basic and acidic residues. Residues 100–114 (LDLDEGMALEADPSD) are compositionally biased toward acidic residues.

The protein belongs to the ZipA family. In terms of assembly, interacts with FtsZ via their C-terminal domains.

The protein resides in the cell inner membrane. Functionally, essential cell division protein that stabilizes the FtsZ protofilaments by cross-linking them and that serves as a cytoplasmic membrane anchor for the Z ring. Also required for the recruitment to the septal ring of downstream cell division proteins. In Pseudomonas paraeruginosa (strain DSM 24068 / PA7) (Pseudomonas aeruginosa (strain PA7)), this protein is Cell division protein ZipA.